Reading from the N-terminus, the 273-residue chain is Tyrosinase (273 aa).

Positions 1–18 (MCLLALGFLLGILQPASG) are cleaved as a signal peptide. 2 N-linked (GlcNAc...) asparagine glycosylation sites follow: asparagine 86 and asparagine 169. Histidine 180, histidine 202, and histidine 211 together coordinate Cu cation. The N-linked (GlcNAc...) asparagine glycan is linked to asparagine 230.

It belongs to the tyrosinase family. Cu(2+) serves as cofactor.

It localises to the melanosome membrane. The enzyme catalyses 2 L-dopa + O2 = 2 L-dopaquinone + 2 H2O. It carries out the reaction L-tyrosine + O2 = L-dopaquinone + H2O. Its function is as follows. This is a copper-containing oxidase that functions in the formation of pigments such as melanins and other polyphenolic compounds. This Pelodiscus sinensis (Chinese softshell turtle) protein is Tyrosinase (TYR).